Here is a 125-residue protein sequence, read N- to C-terminus: Phosphoribosyl-AMP cyclohydrolase (125 aa).

D74 lines the Mg(2+) pocket. A Zn(2+)-binding site is contributed by C75. The Mg(2+) site is built by D76 and D78. The Zn(2+) site is built by C92 and C99.

It belongs to the PRA-CH family. In terms of assembly, homodimer. The cofactor is Mg(2+). Zn(2+) is required as a cofactor.

It is found in the cytoplasm. It catalyses the reaction 1-(5-phospho-beta-D-ribosyl)-5'-AMP + H2O = 1-(5-phospho-beta-D-ribosyl)-5-[(5-phospho-beta-D-ribosylamino)methylideneamino]imidazole-4-carboxamide. It functions in the pathway amino-acid biosynthesis; L-histidine biosynthesis; L-histidine from 5-phospho-alpha-D-ribose 1-diphosphate: step 3/9. In terms of biological role, catalyzes the hydrolysis of the adenine ring of phosphoribosyl-AMP. The polypeptide is Phosphoribosyl-AMP cyclohydrolase (Geobacter sulfurreducens (strain ATCC 51573 / DSM 12127 / PCA)).